A 206-amino-acid polypeptide reads, in one-letter code: Pro-glucagon (206 aa).

An N-terminal signal peptide occupies residues 1–22; it reads MKMKSIYFIAGLLLMIVQGSWQ. The interval 27-57 is disordered; the sequence is DTEEKSRSFKASQSEPLDESRQLNEVKRHSQ. Positions 44 to 54 are enriched in basic and acidic residues; sequence DESRQLNEVKR. Residues 86–109 constitute a propeptide that is removed on maturation; sequence NGQQGQEDKENDKFPDQLSSNAIS. At arginine 147 the chain carries Arginine amide. Propeptides lie at residues 151 to 163 and 199 to 206; these read DFPEKALMAEEMG and RDLLGEYQ.

It belongs to the glucagon family. Post-translationally, proglucagon is post-translationally processed in a tissue-specific manner in pancreatic A cells and intestinal L cells. In pancreatic A cells, the major bioactive hormone is glucagon cleaved by PCSK2/PC2. In the intestinal L cells PCSK1/PC1 liberates GLP-1 and GLP-2. GLP-1 is further N-terminally truncated by post-translational processing in the intestinal L cells resulting in GLP-1(7-37) GLP-1-(7-36)amide.

The protein resides in the secreted. In terms of biological role, plays a key role in glucose metabolism and homeostasis. Regulates blood glucose by increasing gluconeogenesis and decreasing glycolysis. Functionally, potent stimulator of glucose-dependent insulin release. Plays important roles on gastric motility and the suppression of plasma glucagon levels. May be involved in the suppression of satiety and stimulation of glucose disposal in peripheral tissues, independent of the actions of insulin. Has growth-promoting activities on intestinal epithelium. May also regulate the hypothalamic pituitary axis (HPA) via effects on LH, TSH, CRH, oxytocin, and vasopressin secretion. Increases islet mass through stimulation of islet neogenesis and pancreatic beta cell proliferation. Its function is as follows. Stimulates intestinal growth and up-regulates villus height in the small intestine, concomitant with increased crypt cell proliferation and decreased enterocyte apoptosis. The gastrointestinal tract, from the stomach to the colon is the principal target for GLP-2 action. Plays a key role in nutrient homeostasis, enhancing nutrient assimilation through enhanced gastrointestinal function, as well as increasing nutrient disposal. Stimulates intestinal glucose transport and decreases mucosal permeability. The protein is Pro-glucagon (GCG) of Gallus gallus (Chicken).